Reading from the N-terminus, the 103-residue chain is Auxin-responsive protein SAUR50 (103 aa).

This sequence belongs to the ARG7 family.

Its function is as follows. Effector of hormonal and environmental signals in plant growth. Involved in heliotropism. This chain is Auxin-responsive protein SAUR50, found in Helianthus annuus (Common sunflower).